Consider the following 99-residue polypeptide: MFAIIQTGGKQVKVTEGQEIYVEKLDVEAGDTFEFTEVLATSDKIGHPYVEGAKVVAEVIKQGRQRKIIVFKYKRRKNYRRKQGHRQAYTKLVVKSIQG.

This sequence belongs to the bacterial ribosomal protein bL21 family. Part of the 50S ribosomal subunit. Contacts protein L20.

In terms of biological role, this protein binds to 23S rRNA in the presence of protein L20. This chain is Large ribosomal subunit protein bL21, found in Acholeplasma laidlawii (strain PG-8A).